The primary structure comprises 367 residues: Cis-3-hydroxy-L-proline dehydratase (367 aa).

Catalysis depends on Lys-165, which acts as the Proton donor/acceptor. Residues Asp-193, Glu-218, and Asp-241 each coordinate Mg(2+). Lys-265 acts as the Proton donor/acceptor in catalysis.

This sequence belongs to the mandelate racemase/muconate lactonizing enzyme family. The cofactor is Mg(2+).

The enzyme catalyses cis-3-hydroxy-L-proline = 1-pyrroline-2-carboxylate + H2O. In terms of biological role, catalyzes the dehydration of cis-3-hydroxy-L-proline (c3LHyp) to Delta(1)-pyrroline-2-carboxylate (Pyr2C). Is likely involved in a degradation pathway that converts c3LHyp to L-proline, which allows L.aggregata to grow on c3LHyp as a sole carbon source. Also catalyzes the epimerization of c3LHyp to trans-3-hydroxy-D-proline (t3DHyp), a competing reaction occurring from the same enolate anion intermediate. L-proline, t3LHyp, t4LHyp, c4DHyp and their methylated derivatives are not substrates. This is Cis-3-hydroxy-L-proline dehydratase from Roseibium aggregatum (strain ATCC 25650 / DSM 13394 / JCM 20685 / NBRC 16684 / NCIMB 2208 / IAM 12614 / B1) (Stappia aggregata).